A 693-amino-acid chain; its full sequence is Glycine--tRNA ligase beta subunit (693 aa).

It belongs to the class-II aminoacyl-tRNA synthetase family. As to quaternary structure, tetramer of two alpha and two beta subunits.

It is found in the cytoplasm. It catalyses the reaction tRNA(Gly) + glycine + ATP = glycyl-tRNA(Gly) + AMP + diphosphate. This chain is Glycine--tRNA ligase beta subunit, found in Vibrio vulnificus (strain CMCP6).